Here is a 522-residue protein sequence, read N- to C-terminus: F-box/LRR-repeat protein 16 (522 aa).

Residues 38-84 (YDFTANLPDDCLAHIFQFLSAGDRKRCSLVSKRWLLVDGQNRHRLSL) enclose the F-box domain. LRR repeat units lie at residues 115–140 (SFSL…KLRG), 141–166 (CREI…SCGS), 169–191 (FGAK…SLKR), 266–290 (RLQV…HIVK), 291–316 (TPDC…HIDG), 319–344 (VKRI…VLIG), 348–369 (TYMS…ALCG), 370–393 (SGTI…KFCI), 395–420 (GCLI…KVKK), and 421–447 (CSLV…DDDE).

In Arabidopsis thaliana (Mouse-ear cress), this protein is F-box/LRR-repeat protein 16 (FBL16).